A 316-amino-acid chain; its full sequence is Retinol dehydrogenase 7 (316 aa).

33–57 (FITGCDSGFGNLLARQLDRRGMRVL) lines the NADP(+) pocket. Ser-163 is a substrate binding site. Tyr-175 functions as the Proton acceptor in the catalytic mechanism.

The protein belongs to the short-chain dehydrogenases/reductases (SDR) family. In terms of tissue distribution, highly expressed in liver. Also expressed in lung, eye, kidney, and brain.

It localises to the microsome. Its subcellular location is the endoplasmic reticulum. It catalyses the reaction all-trans-retinol--[retinol-binding protein] + NAD(+) = all-trans-retinal--[retinol-binding protein] + NADH + H(+). Its pathway is cofactor metabolism; retinol metabolism. Acts on androgens and retinols, i.e. has steroid 3-alpha- and 17-beta-dehydrogenase and cis/trans-retinol catalytic activities. This chain is Retinol dehydrogenase 7 (Rdh7), found in Mus musculus (Mouse).